The following is a 534-amino-acid chain: Acetyltransferase MATC1 (534 aa).

Catalysis depends on proton acceptor residues H186 and D459.

The protein belongs to the plant acyltransferase family.

The protein resides in the cell membrane. It participates in secondary metabolite biosynthesis. Acetyltransferase; part of the gene cluster that mediates the biosynthesis of mannosylerythritol lipids (MELs), surface-active substances that enhance the availability of water-insoluble substrates. Mannosylerythritol lipid production is responsible for hemolytic activity of Ustilago maydis. Depending on the number of acetyl groups, mannosylerythritol lipids can be differentiated into MEL A (fully acetylated), MEL B and MEL C (monoacetylated at R-6 and R-4, respectively), and the fully deacetylated MEL D. The first step in the pathway is the generation of mannosylerythritol by the glycosyltransferase EMT1 which catalyzes the transfer of GDP-mannose to the C-4 atom of meso-erythritol. This reaction has to be stereospecific, since only mannosyl-D-erythritol is generated. The produced disaccharide is subsequently acylated with fatty acids of various lengths derived from the peroxisomal beta-oxidation by the peroxisomal acyltransferases MAC1 and MAC2 at positions C-2 and C-3, repectively. The existence of MEL derivatives which carry an acetyl group at C-2 implies that at least MAC1 also accepts acetyl-CoA as a donor. The final step of MEL biosynthesis is the acetylation of the fully acylated mannosylerythritol lipids catalyzed by the acetyl-CoA-dependent acetyltransferase MAT1. MAT1 displays a relaxed regioselectivity and is able to transfer acetylgroups to both positions C-4 and C-6 of the mannosyl moiety. The sequence is that of Acetyltransferase MATC1 from Mycosarcoma maydis (Corn smut fungus).